The chain runs to 223 residues: 2-C-methyl-D-erythritol 4-phosphate cytidylyltransferase (223 aa).

Belongs to the IspD/TarI cytidylyltransferase family. IspD subfamily.

It catalyses the reaction 2-C-methyl-D-erythritol 4-phosphate + CTP + H(+) = 4-CDP-2-C-methyl-D-erythritol + diphosphate. Its pathway is isoprenoid biosynthesis; isopentenyl diphosphate biosynthesis via DXP pathway; isopentenyl diphosphate from 1-deoxy-D-xylulose 5-phosphate: step 2/6. Catalyzes the formation of 4-diphosphocytidyl-2-C-methyl-D-erythritol from CTP and 2-C-methyl-D-erythritol 4-phosphate (MEP). This Prochlorococcus marinus subsp. pastoris (strain CCMP1986 / NIES-2087 / MED4) protein is 2-C-methyl-D-erythritol 4-phosphate cytidylyltransferase.